Consider the following 445-residue polypeptide: 3-phosphoshikimate 1-carboxyvinyltransferase (445 aa).

3-phosphoshikimate is bound by residues lysine 28, serine 29, and arginine 33. Lysine 28 serves as a coordination point for phosphoenolpyruvate. Phosphoenolpyruvate-binding residues include glycine 101 and arginine 129. The 3-phosphoshikimate site is built by serine 175, glutamine 177, aspartate 328, and lysine 355. Position 177 (glutamine 177) interacts with phosphoenolpyruvate. Aspartate 328 functions as the Proton acceptor in the catalytic mechanism. Phosphoenolpyruvate contacts are provided by arginine 359 and arginine 402.

It belongs to the EPSP synthase family. In terms of assembly, monomer.

It localises to the cytoplasm. The catalysed reaction is 3-phosphoshikimate + phosphoenolpyruvate = 5-O-(1-carboxyvinyl)-3-phosphoshikimate + phosphate. It participates in metabolic intermediate biosynthesis; chorismate biosynthesis; chorismate from D-erythrose 4-phosphate and phosphoenolpyruvate: step 6/7. Functionally, catalyzes the transfer of the enolpyruvyl moiety of phosphoenolpyruvate (PEP) to the 5-hydroxyl of shikimate-3-phosphate (S3P) to produce enolpyruvyl shikimate-3-phosphate and inorganic phosphate. The chain is 3-phosphoshikimate 1-carboxyvinyltransferase from Rhodopseudomonas palustris (strain HaA2).